Consider the following 651-residue polypeptide: UvrABC system protein B (651 aa).

The 387-residue stretch at 25–411 folds into the Helicase ATP-binding domain; the sequence is RGISCGAKEQ…TGGVATEQLI (387 aa). An ATP-binding site is contributed by 38-45; sequence GVTGSGKT. The short motif at 91–114 is the Beta-hairpin element; it reads YYDYYQPEAYIPQSDVYIEKDALI. The region spanning 427–591 is the Helicase C-terminal domain; that stretch reads DGQIHDVMCE…IVPRTIQKPV (165 aa). Residues 593–615 are disordered; sequence TSLSERVGSSRKKVSRDTNTDPA. The UVR domain occupies 616 to 651; it reads NRDIVELQKEMLLCAENLDFERAVEIRNEIKRLTAP.

The protein belongs to the UvrB family. In terms of assembly, forms a heterotetramer with UvrA during the search for lesions. Interacts with UvrC in an incision complex.

Its subcellular location is the cytoplasm. Functionally, the UvrABC repair system catalyzes the recognition and processing of DNA lesions. A damage recognition complex composed of 2 UvrA and 2 UvrB subunits scans DNA for abnormalities. Upon binding of the UvrA(2)B(2) complex to a putative damaged site, the DNA wraps around one UvrB monomer. DNA wrap is dependent on ATP binding by UvrB and probably causes local melting of the DNA helix, facilitating insertion of UvrB beta-hairpin between the DNA strands. Then UvrB probes one DNA strand for the presence of a lesion. If a lesion is found the UvrA subunits dissociate and the UvrB-DNA preincision complex is formed. This complex is subsequently bound by UvrC and the second UvrB is released. If no lesion is found, the DNA wraps around the other UvrB subunit that will check the other stand for damage. In Anaplasma marginale (strain St. Maries), this protein is UvrABC system protein B.